The sequence spans 150 residues: 3-dehydroquinate dehydratase (150 aa).

The active-site Proton acceptor is the tyrosine 26. Residues asparagine 77, histidine 83, and aspartate 90 each coordinate substrate. Residue histidine 103 is the Proton donor of the active site. Residues 104–105 (LS) and arginine 114 contribute to the substrate site.

This sequence belongs to the type-II 3-dehydroquinase family. As to quaternary structure, homododecamer.

It carries out the reaction 3-dehydroquinate = 3-dehydroshikimate + H2O. Its pathway is metabolic intermediate biosynthesis; chorismate biosynthesis; chorismate from D-erythrose 4-phosphate and phosphoenolpyruvate: step 3/7. In terms of biological role, catalyzes a trans-dehydration via an enolate intermediate. This is 3-dehydroquinate dehydratase from Sodalis glossinidius (strain morsitans).